Here is an 862-residue protein sequence, read N- to C-terminus: Rab GTPase-binding effector protein 1 (862 aa).

An N-acetylalanine modification is found at alanine 2. Residues 11–328 are a coiled coil; the sequence is DVSLQQRVAE…KDQEEDEQQR (318 aa). The residue at position 282 (lysine 282) is an N6-acetyllysine. Disordered stretches follow at residues 315-340 and 355-374; these read ELKK…KIDT and EESS…THGS. 3 positions are modified to phosphoserine: serine 374, serine 377, and serine 407. Position 408 is a phosphothreonine (threonine 408). Phosphoserine is present on serine 410. Residues 534-816 are a coiled coil; that stretch reads DMCSNYEKQL…LQTELDVSEQ (283 aa).

Belongs to the rabaptin family. As to quaternary structure, heterodimer with RABGEF1. The heterodimer binds RAB4A and RAB5A that have been activated by GTP-binding. Interacts with TSC2. Interacts with GGA1 (via GAE domain), GGA2 (via GAE domain) and GGA3 (via GAE domain). Interacts with AP1G1 (via GAE domain). Interacts with AP1G2 (via GAE domain). Interacts with ECPAS. Interacts with KCNH1. Interacts with PKD1 (via C-terminal domain) and GGA1; the interactions recruit PKD1:PKD2 complex to GGA1 and ARL3 at trans-Golgi network. Interacts with KCNH1. In terms of processing, proteolytic cleavage by caspases in apoptotic cells causes loss of endosome fusion activity.

The protein resides in the cytoplasm. It localises to the early endosome. It is found in the recycling endosome. Its subcellular location is the cytoplasmic vesicle. Rab effector protein acting as linker between gamma-adaptin, RAB4A and RAB5A. Involved in endocytic membrane fusion and membrane trafficking of recycling endosomes. Involved in KCNH1 channels trafficking to and from the cell membrane. Stimulates RABGEF1 mediated nucleotide exchange on RAB5A. Mediates the traffic of PKD1:PKD2 complex from the endoplasmic reticulum through the Golgi to the cilium. This is Rab GTPase-binding effector protein 1 (Rabep1) from Rattus norvegicus (Rat).